The following is a 336-amino-acid chain: MLYRLARAGFFQLDAEKAHDLAISNFKRFTGTPFDLFYRQQLPHRPVQCMGLTFKNPVGLAAGLDKNGECIEAFGAMGFGFVEVGTVTPRPQAGNDKPRLFRLVHAEGIINRMGFNNLGVDHLVENVKRAKYDGIIGINIGKNKDTPIEKGAEDYLICMDKVYPYAGYIAVNISSPNTPGLRSLQYGEALDELLAALKTRQAELAAKHDKYVPLALKIAPDLSDDEIQQICQSLLKNKIDSVIATNTTLDRSLVEGMKFANEAGGLSGRPLQNRSTEVIKCLYKELGEEIPIIGVGGIDSYISAKEKLLAGAKLVQVYSGFIYQGPGLVADIVKNL.

Residues 62 to 66 (AGLDK) and T86 each bind FMN. Residue K66 participates in substrate binding. 111–115 (NRMGF) serves as a coordination point for substrate. The FMN site is built by N139 and N172. Residue N172 coordinates substrate. The Nucleophile role is filled by S175. Position 177 (N177) interacts with substrate. Positions 217 and 245 each coordinate FMN. 246 to 247 (NT) is a binding site for substrate. FMN contacts are provided by residues G268, G297, and 318 to 319 (YS).

This sequence belongs to the dihydroorotate dehydrogenase family. Type 2 subfamily. As to quaternary structure, monomer. FMN is required as a cofactor.

The protein resides in the cell membrane. It catalyses the reaction (S)-dihydroorotate + a quinone = orotate + a quinol. It functions in the pathway pyrimidine metabolism; UMP biosynthesis via de novo pathway; orotate from (S)-dihydroorotate (quinone route): step 1/1. Its function is as follows. Catalyzes the conversion of dihydroorotate to orotate with quinone as electron acceptor. The polypeptide is Dihydroorotate dehydrogenase (quinone) (Vibrio cholerae serotype O1 (strain ATCC 39541 / Classical Ogawa 395 / O395)).